A 184-amino-acid polypeptide reads, in one-letter code: Guanylate kinase (184 aa).

Positions 5 to 183 (KKLIILTGPS…TAKRIIKLIQ (179 aa)) constitute a Guanylate kinase-like domain. ATP is bound at residue 12-19 (GPSGVGKG).

It belongs to the guanylate kinase family.

The protein localises to the cytoplasm. It catalyses the reaction GMP + ATP = GDP + ADP. Essential for recycling GMP and indirectly, cGMP. The protein is Guanylate kinase of Prochlorococcus marinus (strain MIT 9312).